Consider the following 928-residue polypeptide: Mitogen-activated protein kinase kinase kinase dlk-1 (928 aa).

Positions 1-72 are disordered; it reads MTSTTMVTTL…GQKEGSPDPK (72 aa). The span at 42–52 shows a compositional bias: polar residues; sequence LVTQSAPNTPI. The span at 53–69 shows a compositional bias: basic and acidic residues; the sequence is QHREQANAEFGQKEGSP. The Protein kinase domain maps to 135-377; sequence ISELEWLGSG…FSHIRQHWEI (243 aa). ATP-binding positions include 141–149 and K162; that span reads LGSGSQGAV. D246 serves as the catalytic Proton acceptor. Positions 459–480 are leucine-zipper; that stretch reads LQGCFTELKLKESELAEWEKDL. 3 disordered regions span residues 483–575, 644–696, and 802–845; these read REQW…DAIR, RRVS…PSRN, and ENAN…SMES. Acidic residues predominate over residues 509–519; it reads GYDDMSSDEDV. Low complexity predominate over residues 530–557; the sequence is SNTSSSSGVQSSPFSRQSSSRSSAGQQT. The tract at residues 605–814 is important for interaction between isoform a and isoform c; sequence SAGAGSCTAI…NDVDLTSSMD (210 aa). Polar residues predominate over residues 647 to 656; it reads STSVNKSTAV. Positions 677–695 are enriched in low complexity; it reads SCSSPRSSSKLNRSSYPSR. Positions 823-833 are enriched in acidic residues; the sequence is ADVESSEEDEG. Phosphoserine is present on residues S874 and S878. Residues 874–879 carry the SDGLSD hexapeptide motif; it reads SDGLSD.

The protein belongs to the protein kinase superfamily. STE Ser/Thr protein kinase family. MAP kinase kinase kinase subfamily. In terms of assembly, homooligomer (via leucine zipper domain and hexapeptide motif). Isoform a (via leucine zipper domain) forms a heterooligomer with isoform c (via leucine zipper domain). Isoform c does not self-associate. The cofactor is Mg(2+). Post-translationally, ubiquitinated by rpm-1. Negatively regulated by ubiquitination by fsn-1 bound rpm-1, followed by degradation. In terms of processing, phosphorylation at Ser-874 and/or at Ser-878 abolishes interaction with isoform c and promotes binding to isoform a kinase domain (likely in trans) resulting in isoform a self-association and activation. In terms of tissue distribution, expressed in nerve ring, nerve cord, neurons, and pharynx.

The protein resides in the synapse. It is found in the cytoplasm. It localises to the cell projection. The protein localises to the axon. Its subcellular location is the dendrite. The protein resides in the cilium. The enzyme catalyses L-seryl-[protein] + ATP = O-phospho-L-seryl-[protein] + ADP + H(+). It catalyses the reaction L-threonyl-[protein] + ATP = O-phospho-L-threonyl-[protein] + ADP + H(+). Its activity is regulated as follows. Inactive when associated with isoform c. Dissociation from isoform c, which is dependent on the phosphorylation of the C-terminal hexapeptide, results in self-association and activation. Transient increase in Ca(2+) levels caused by axonal injury or synaptic activity triggers the dissociation of isoform a from isoform c; the dissociation may be influenced by the phosphorylation status of the C-terminal hexapeptide. In terms of biological role, component of a MAP kinase pathway that functions presynaptically to regulate synaptic architecture and presynaptic differentiation. Phosphorylates and activates mkk-4. Has a role in axonal regrowth following injury and synaptogenesis. Plays a role in modulating polymerization of neuronal microtubules. Also promotes tubulin post-translational modifications that protect microtubules. Plays a role in cilium length regulation, possibly by reducing rab-5 mediated endocytosis, and may also have a role in intraflagellar transport in cilia. Plays a role in the formation of muscle connections, also called muscle arm extensions, between the body wall and the motor axons in the dorsal and ventral cord. Functionally, has a role in synapse and axon development, and in axonal regrowth following injury. By forming heterooligomers with isoform a, acts as an inhibitor of isoform a activation. Its inhibitory function is independent of its catalytic activity. In Caenorhabditis elegans, this protein is Mitogen-activated protein kinase kinase kinase dlk-1 (dlk-1).